The following is a 507-amino-acid chain: tRNA (guanine(6)-N(2))-methyltransferase THUMP3 (507 aa).

The 121-residue stretch at 165-285 (KIDQRNVKKE…DNEVIVGIAL (121 aa)) folds into the THUMP domain.

Belongs to the methyltransferase superfamily. As to quaternary structure, part of the heterodimeric THUMPD3-TRM112 methyltransferase complex; this complex forms an active tRNA methyltransferase, where TRMT112 acts as an activator of the catalytic subunit THUMPD3.

The protein resides in the cytoplasm. It carries out the reaction guanosine(6) in tRNA + S-adenosyl-L-methionine = N(2)-methylguanosine(6) in tRNA + S-adenosyl-L-homocysteine + H(+). It catalyses the reaction guanosine(7) in tRNA + S-adenosyl-L-methionine = N(2)-methylguanosine(7) in tRNA + S-adenosyl-L-homocysteine + H(+). Catalytic subunit of the THUMPD3-TRM112 methyltransferase complex, that specifically mediates the S-adenosyl-L-methionine-dependent N(2)-methylation of guanosine nucleotide at position 6 (m2G6) in tRNAs. This is one of the major tRNA (guanine-N(2))-methyltransferases. Also catalyzes the S-adenosyl-L-methionine-dependent N(2)-methylation of guanosine nucleotide at position 7 of tRNA(Trp). This Homo sapiens (Human) protein is tRNA (guanine(6)-N(2))-methyltransferase THUMP3.